Reading from the N-terminus, the 180-residue chain is Large ribosomal subunit protein mL41 (180 aa).

Residues 1–21 constitute a mitochondrion transit peptide; that stretch reads MKLVLVSTRGVRSLNSTNFPA.

The protein belongs to the mitochondrion-specific ribosomal protein mL41 family. Component of the mitochondrial ribosome large subunit (39S) which comprises a 16S rRNA and about 50 distinct proteins.

It localises to the mitochondrion. The polypeptide is Large ribosomal subunit protein mL41 (mrpl-41) (Caenorhabditis elegans).